Consider the following 263-residue polypeptide: (E)-2-((N-methylformamido)methylene)succinate hydrolase (263 aa).

S96 acts as the Nucleophile in catalysis. Catalysis depends on residues N120 and H241.

This sequence belongs to the AB hydrolase superfamily. In terms of assembly, monomer.

The catalysed reaction is (E)-2-((N-methylformamido) methylene)succinate + 2 H2O + H(+) = succinate semialdehyde + methylamine + formate + CO2. Functionally, involved in the degradation of the pyridine ring of trigonelline (TG; N-methylnicotinate) into succinate and methylamine as carbon and nitrogen sources, respectively. Catalyzes the hydrolysis of (E)-2-((N-methylformamido)methylene)succinate (MFMS) into formic acid, succinate semialdehyde (SSA), methylamine and carbon dioxide. The chain is (E)-2-((N-methylformamido)methylene)succinate hydrolase from Acinetobacter baylyi (strain ATCC 33305 / BD413 / ADP1).